The sequence spans 313 residues: Glyoxylate/hydroxypyruvate reductase A HPR2 (313 aa).

NADP(+) contacts are provided by residues 152–155, 174–176, 230–232, and D256; these read LGRI, SRT, and IGR. The active site involves R232. Residue E261 is part of the active site. H279 acts as the Proton donor in catalysis. Residue 279 to 281 participates in NADP(+) binding; sequence HVG.

Belongs to the D-isomer specific 2-hydroxyacid dehydrogenase family. GyaR subfamily. Homodimer.

Its subcellular location is the cytoplasm. The catalysed reaction is glycolate + NADP(+) = glyoxylate + NADPH + H(+). The enzyme catalyses (R)-glycerate + NAD(+) = 3-hydroxypyruvate + NADH + H(+). It carries out the reaction (R)-glycerate + NADP(+) = 3-hydroxypyruvate + NADPH + H(+). With respect to regulation, strongly inhibited by oxalate. In terms of biological role, catalyzes the NADPH-dependent reduction of glyoxylate and hydroxypyruvate (HP) into glycolate and glycerate in the cytoplasm, thus providing a cytosolic bypass to the photorespiratory core cycle. Mostly active in the presence of NADPH and hydroxypyruvate. The protein is Glyoxylate/hydroxypyruvate reductase A HPR2 (HPR2) of Arabidopsis thaliana (Mouse-ear cress).